The following is a 483-amino-acid chain: Ero1-like protein (483 aa).

The signal sequence occupies residues 1–29 (MTTRTVQRNLWASAAVVLVLLLLWTDTTG). 6 disulfide bridges follow: cysteine 44–cysteine 57, cysteine 46–cysteine 55, cysteine 94–cysteine 402, cysteine 103–cysteine 108, cysteine 227–cysteine 251, and cysteine 405–cysteine 408. Arginine 206, threonine 208, and tryptophan 219 together coordinate FAD. Asparagine 232 is a glycosylation site (N-linked (GlcNAc...) asparagine). FAD contacts are provided by serine 262, histidine 265, and arginine 301. N-linked (GlcNAc...) asparagine glycosylation occurs at asparagine 395.

It belongs to the EROs family. As to quaternary structure, may function both as a monomer and a homodimer. The cofactor is FAD.

It localises to the endoplasmic reticulum membrane. Oxidoreductase involved in disulfide bond formation in the endoplasmic reticulum. Efficiently reoxidizes pdi-1, the enzyme catalyzing protein disulfide formation, in order to allow pdi-1 to sustain additional rounds of disulfide formation. Following pdi reoxidation, passes its electrons to molecular oxygen via FAD, leading to the production of reactive oxygen species (ROS) in the cell. The chain is Ero1-like protein (Ero1L) from Drosophila melanogaster (Fruit fly).